The following is a 98-amino-acid chain: ESAT-6-like protein EsxM (98 aa).

The protein belongs to the WXG100 family. CFP-10 subfamily.

It localises to the secreted. The polypeptide is ESAT-6-like protein EsxM (esxM) (Mycobacterium bovis (strain ATCC BAA-935 / AF2122/97)).